A 291-amino-acid chain; its full sequence is Lipoyl synthase, organellar chromatophore (291 aa).

[4Fe-4S] cluster is bound by residues Cys-33, Cys-38, Cys-44, Cys-59, Cys-63, Cys-66, and Ser-274. In terms of domain architecture, Radical SAM core spans 45 to 263; the sequence is FAGGTATFLI…AIGELEMNFL (219 aa).

This sequence belongs to the radical SAM superfamily. Lipoyl synthase family. [4Fe-4S] cluster serves as cofactor.

Its subcellular location is the plastid. The protein resides in the organellar chromatophore. It carries out the reaction [[Fe-S] cluster scaffold protein carrying a second [4Fe-4S](2+) cluster] + N(6)-octanoyl-L-lysyl-[protein] + 2 oxidized [2Fe-2S]-[ferredoxin] + 2 S-adenosyl-L-methionine + 4 H(+) = [[Fe-S] cluster scaffold protein] + N(6)-[(R)-dihydrolipoyl]-L-lysyl-[protein] + 4 Fe(3+) + 2 hydrogen sulfide + 2 5'-deoxyadenosine + 2 L-methionine + 2 reduced [2Fe-2S]-[ferredoxin]. It functions in the pathway protein modification; protein lipoylation via endogenous pathway; protein N(6)-(lipoyl)lysine from octanoyl-[acyl-carrier-protein]: step 2/2. Catalyzes the radical-mediated insertion of two sulfur atoms into the C-6 and C-8 positions of the octanoyl moiety bound to the lipoyl domains of lipoate-dependent enzymes, thereby converting the octanoylated domains into lipoylated derivatives. The sequence is that of Lipoyl synthase, organellar chromatophore from Paulinella chromatophora.